The primary structure comprises 186 residues: RIO-type serine/threonine-protein kinase Rio1 (186 aa).

Lysine 15 is an ATP binding site. The Proton acceptor role is filled by aspartate 124. 2 residues coordinate Mg(2+): asparagine 129 and aspartate 140. Aspartate 140 serves as the catalytic 4-aspartylphosphate intermediate.

This sequence belongs to the protein kinase superfamily. RIO-type Ser/Thr kinase family.

The enzyme catalyses L-seryl-[protein] + ATP = O-phospho-L-seryl-[protein] + ADP + H(+). It carries out the reaction L-threonyl-[protein] + ATP = O-phospho-L-threonyl-[protein] + ADP + H(+). It catalyses the reaction ATP + H2O = ADP + phosphate + H(+). Its function is as follows. Despite the protein kinase domain is proposed to act predominantly as an ATPase. The chain is RIO-type serine/threonine-protein kinase Rio1 (rio1) from Thermoplasma acidophilum (strain ATCC 25905 / DSM 1728 / JCM 9062 / NBRC 15155 / AMRC-C165).